The primary structure comprises 705 residues: Zinc finger protein 770 (705 aa).

Lysine 16 is covalently cross-linked (Glycyl lysine isopeptide (Lys-Gly) (interchain with G-Cter in SUMO2)). C2H2-type zinc fingers lie at residues 31–53 (YICN…YLIH), 59–81 (FECD…QLTH), and 85–107 (FSCN…QQLH). Glycyl lysine isopeptide (Lys-Gly) (interchain with G-Cter in SUMO2) cross-links involve residues lysine 116, lysine 124, and lysine 149. 3 C2H2-type zinc fingers span residues 164–186 (HACT…SLIH), 192–214 (FKCV…QLTH), and 220–242 (FQCC…KQIH). Residue lysine 266 forms a Glycyl lysine isopeptide (Lys-Gly) (interchain with G-Cter in SUMO2) linkage. The segment at 298-322 (FQCSECEECFESEQILNGHKCLPAR) adopts a C2H2-type 7; degenerate zinc-finger fold. 4 consecutive C2H2-type zinc fingers follow at residues 485–507 (CPCD…YLIH), 513–535 (FDCN…KLTH), 640–662 (YQCS…YLIH), and 668–690 (FECS…QLTH). Lysine 698 participates in a covalent cross-link: Glycyl lysine isopeptide (Lys-Gly) (interchain with G-Cter in SUMO2).

It belongs to the krueppel C2H2-type zinc-finger protein family.

The protein localises to the nucleus. May be involved in transcriptional regulation. The sequence is that of Zinc finger protein 770 (Znf770) from Mus musculus (Mouse).